A 938-amino-acid polypeptide reads, in one-letter code: Histone deacetylase 7 (938 aa).

Residues 1–40 are disordered; sequence MHSPGAGCPALQPDTPGSQPQPMDLRVGQRPTVEPPPEPA. The interaction with MEF2C stretch occupies residues 1 to 121; the sequence is MHSPGAGCPA…LAEVILKKQQ (121 aa). Transcription repression stretches follow at residues 2-254 and 241-533; these read HSPG…DGDR and GPNP…EHAG. Residues 72 to 172 form an interaction with MEF2A region; sequence SMDPPMPELQ…LPTEPPEHFP (101 aa). A Phosphoserine modification is found at Ser-132. Disordered regions lie at residues 155–280, 331–361, 373–463, and 472–491; these read SFLP…HHGL, SGSG…APLQ, LIKP…DSVL, and RPLS…LSPE. Ser-178 bears the Phosphoserine; by MARK2, MARK3 and PKD/PRKD1 mark. A compositionally biased stretch (basic and acidic residues) spans 190–204; it reads KSLERRKNPLLRKES. At Ser-204 the chain carries Phosphoserine; by PKD/PRKD2. The span at 220-235 shows a compositional bias: low complexity; it reads SSPSSSSTPASGCSSP. Ser-344 is subject to Phosphoserine; by PKD/PRKD1. A phosphoserine mark is found at Ser-350 and Ser-398. Residues 350 to 361 show a composition bias toward low complexity; that stretch reads SATASPLLAPLQ. 2 stretches are compositionally biased toward low complexity: residues 429-448 and 479-491; these read GRGS…EQQH and SSPA…LSPE. Residue Ser-479 is modified to Phosphoserine; by PKD/PRKD1. Ser-480 carries the phosphoserine modification. The tract at residues 505–852 is histone deacetylase; that stretch reads PATGLVYDSV…VAALLGNKVD (348 aa). 3 residues coordinate Zn(2+): Cys-520, Cys-522, and His-528. Ser-582 is modified (phosphoserine). Position 605 (Cys-605) interacts with Zn(2+). His-657 is an active-site residue. Positions 864–938 are interaction with SIN3A; sequence NLSAIRSLEA…LVEEEEPMNL (75 aa). The Nuclear export signal signature appears at 904–938; the sequence is AEVEAVTALASLSVGILAEDRPSERLVEEEEPMNL.

It belongs to the histone deacetylase family. HD type 2 subfamily. As to quaternary structure, interacts with HDAC1, HDAC2, HDAC3, HDAC4, HDAC5, NCOR1, NCOR2, SIN3A, SIN3B, RBBP4, RBBP7, MTA1L1, SAP30 and MBD3. Interacts with KAT5 and EDNRA. Interacts with the 14-3-3 protein YWHAE, MEF2A, MEF2B and MEF2C. Interacts with ZMYND15. Interacts with KDM5B. Interacts with PML. Interacts with FOXP3. Interacts with RARA. May be phosphorylated by CaMK1. Phosphorylated by the PKC kinases PKN1 and PKN2, impairing nuclear import. Phosphorylation at Ser-178 by MARK2, MARK3 and PRKD1 promotes interaction with 14-3-3 proteins and export from the nucleus. Phosphorylation at Ser-178 is a prerequisite for phosphorylation at Ser-204. As to expression, highly expressed in heart and lung. Expressed at intermediate level in muscle.

Its subcellular location is the nucleus. The protein localises to the cytoplasm. It catalyses the reaction N(6)-acetyl-L-lysyl-[histone] + H2O = L-lysyl-[histone] + acetate. It carries out the reaction N(6)-acetyl-L-lysyl-[protein] + H2O = L-lysyl-[protein] + acetate. Its activity is regulated as follows. Its activity is inhibited by Trichostatin A (TSA), a known histone deacetylase inhibitor. In terms of biological role, responsible for the deacetylation of lysine residues on the N-terminal part of the core histones (H2A, H2B, H3 and H4). Histone deacetylation gives a tag for epigenetic repression and plays an important role in transcriptional regulation, cell cycle progression and developmental events. Histone deacetylases act via the formation of large multiprotein complexes. Involved in muscle maturation by repressing transcription of myocyte enhancer factors such as MEF2A, MEF2B and MEF2C. During muscle differentiation, it shuttles into the cytoplasm, allowing the expression of myocyte enhancer factors. Positively regulates the transcriptional repressor activity of FOXP3. Serves as a corepressor of RARA, causing its deacetylation and inhibition of RARE DNA element binding. In association with RARA, plays a role in the repression of microRNA-10a and thereby in the inflammatory response. Also acetylates non-histone proteins, such as ALKBH5. In Mus musculus (Mouse), this protein is Histone deacetylase 7 (Hdac7).